Here is a 161-residue protein sequence, read N- to C-terminus: Ubiquitin-conjugating enzyme E2Q-like protein 1 (161 aa).

A UBC core domain is found at 1-154; the sequence is MKELQDIARL…VKTHEKYGWV (154 aa). Cysteine 88 acts as the Glycyl thioester intermediate in catalysis.

This sequence belongs to the ubiquitin-conjugating enzyme family. As to quaternary structure, interacts with FBXW7.

Its subcellular location is the nucleus. It carries out the reaction S-ubiquitinyl-[E1 ubiquitin-activating enzyme]-L-cysteine + [E2 ubiquitin-conjugating enzyme]-L-cysteine = [E1 ubiquitin-activating enzyme]-L-cysteine + S-ubiquitinyl-[E2 ubiquitin-conjugating enzyme]-L-cysteine.. It participates in protein modification; protein ubiquitination. Functionally, probable E2 ubiquitin-protein ligase that catalyzes the covalent attachment of ubiquitin to target proteins. May facilitate the monoubiquitination and degradation of MTOR and CCNE1 through interaction with FBXW7. The polypeptide is Ubiquitin-conjugating enzyme E2Q-like protein 1 (Ube2ql1) (Mus musculus (Mouse)).